The following is an 88-amino-acid chain: NADH-ubiquinone oxidoreductase chain 4L (88 aa).

The next 3 helical transmembrane spans lie at 1–21, 22–42, and 55–75; these read MNLSLLLFLIGILGFILNRKN, IILMIIAIEIMLLAITLLVLM, and FSIYIISIAGAESVIGLSILV.

Belongs to the complex I subunit 4L family.

The protein resides in the mitochondrion membrane. It catalyses the reaction a ubiquinone + NADH + 5 H(+)(in) = a ubiquinol + NAD(+) + 4 H(+)(out). Core subunit of the mitochondrial membrane respiratory chain NADH dehydrogenase (Complex I) that is believed to belong to the minimal assembly required for catalysis. Complex I functions in the transfer of electrons from NADH to the respiratory chain. The immediate electron acceptor for the enzyme is believed to be ubiquinone. The chain is NADH-ubiquinone oxidoreductase chain 4L (ND4L) from Schizophyllum commune (Split gill fungus).